A 327-amino-acid polypeptide reads, in one-letter code: Glutaminase 1 (327 aa).

Substrate is bound by residues serine 74, asparagine 126, glutamate 170, asparagine 177, tyrosine 201, tyrosine 253, and valine 271.

The protein belongs to the glutaminase family. Homotetramer.

The catalysed reaction is L-glutamine + H2O = L-glutamate + NH4(+). The protein is Glutaminase 1 (glsA1) of Bacillus subtilis (strain 168).